The sequence spans 463 residues: Glycine--tRNA ligase (463 aa).

2 residues coordinate substrate: R98 and E174. ATP is bound by residues 206-208 (RNE), 216-221 (FRTREF), 290-291 (EL), and 334-337 (GADR). 221–225 (FEQME) serves as a coordination point for substrate. 330–334 (EPSLG) contributes to the substrate binding site.

Belongs to the class-II aminoacyl-tRNA synthetase family. As to quaternary structure, homodimer.

The protein localises to the cytoplasm. The catalysed reaction is tRNA(Gly) + glycine + ATP = glycyl-tRNA(Gly) + AMP + diphosphate. In terms of biological role, catalyzes the attachment of glycine to tRNA(Gly). This chain is Glycine--tRNA ligase, found in Staphylococcus saprophyticus subsp. saprophyticus (strain ATCC 15305 / DSM 20229 / NCIMB 8711 / NCTC 7292 / S-41).